A 133-amino-acid chain; its full sequence is ATP synthase epsilon chain, chloroplastic (133 aa).

It belongs to the ATPase epsilon chain family. F-type ATPases have 2 components, CF(1) - the catalytic core - and CF(0) - the membrane proton channel. CF(1) has five subunits: alpha(3), beta(3), gamma(1), delta(1), epsilon(1). CF(0) has three main subunits: a, b and c.

The protein localises to the plastid. Its subcellular location is the chloroplast thylakoid membrane. In terms of biological role, produces ATP from ADP in the presence of a proton gradient across the membrane. This Thalassiosira pseudonana (Marine diatom) protein is ATP synthase epsilon chain, chloroplastic.